The primary structure comprises 384 residues: Anhydro-N-acetylmuramic acid kinase (384 aa).

9 to 16 (GTSADGVD) provides a ligand contact to ATP.

It belongs to the anhydro-N-acetylmuramic acid kinase family.

It catalyses the reaction 1,6-anhydro-N-acetyl-beta-muramate + ATP + H2O = N-acetyl-D-muramate 6-phosphate + ADP + H(+). It functions in the pathway amino-sugar metabolism; 1,6-anhydro-N-acetylmuramate degradation. Its pathway is cell wall biogenesis; peptidoglycan recycling. In terms of biological role, catalyzes the specific phosphorylation of 1,6-anhydro-N-acetylmuramic acid (anhMurNAc) with the simultaneous cleavage of the 1,6-anhydro ring, generating MurNAc-6-P. Is required for the utilization of anhMurNAc either imported from the medium or derived from its own cell wall murein, and thus plays a role in cell wall recycling. The sequence is that of Anhydro-N-acetylmuramic acid kinase from Synechococcus sp. (strain CC9311).